Here is a 328-residue protein sequence, read N- to C-terminus: Malate dehydrogenase (328 aa).

Residue Gly-11 to Gly-17 participates in NAD(+) binding. The substrate site is built by Arg-94 and Arg-100. NAD(+) is bound by residues Asn-107, Gln-114, and Val-131 to Asn-133. 2 residues coordinate substrate: Asn-133 and Arg-164. Catalysis depends on His-189, which acts as the Proton acceptor.

The protein belongs to the LDH/MDH superfamily. MDH type 2 family.

It catalyses the reaction (S)-malate + NAD(+) = oxaloacetate + NADH + H(+). Catalyzes the reversible oxidation of malate to oxaloacetate. The polypeptide is Malate dehydrogenase (Acinetobacter baumannii (strain AB0057)).